Here is a 115-residue protein sequence, read N- to C-terminus: U3-lycotoxin-Ls1s (115 aa).

The signal sequence occupies residues 1–20; sequence MKFVLLFGVFLLTLFSYSSS. The propeptide occupies 21 to 44; the sequence is EMLDDFDQADEDELLSLIEKEEAR. 4 cysteine pairs are disulfide-bonded: C48–C63, C55–C72, C62–C87, and C74–C85.

It belongs to the neurotoxin 19 (CSTX) family. 01 subfamily. As to expression, expressed by the venom gland.

It localises to the secreted. In Lycosa singoriensis (Wolf spider), this protein is U3-lycotoxin-Ls1s.